Reading from the N-terminus, the 149-residue chain is Putative glycine cleavage system H protein 3 (149 aa).

The 83-residue stretch at 39 to 121 (TCTLGITKYA…EDKGWLIKME (83 aa)) folds into the Lipoyl-binding domain. Residue lysine 80 is modified to N6-lipoyllysine.

Belongs to the GcvH family. In terms of assembly, the glycine cleavage system is composed of four proteins: P, T, L and H. The cofactor is (R)-lipoate.

The glycine cleavage system catalyzes the degradation of glycine. The H protein shuttles the methylamine group of glycine from the P protein to the T protein. The chain is Putative glycine cleavage system H protein 3 (gcvH3) from Dictyostelium discoideum (Social amoeba).